A 48-amino-acid chain; its full sequence is uncharacterized protein (48 aa).

This is an uncharacterized protein from Acidianus convivator (ATV).